The primary structure comprises 347 residues: D-alanine--D-alanine ligase (347 aa).

The region spanning 134–332 (KLYAKDLGVK…LAQSLPKTPK (199 aa)) is the ATP-grasp domain. 161–216 (LIKFNFPFIVKPSNAGSSLGVNVVKEEKELVYALDSAFEYSKEVLIEPFIQGVKEY) contributes to the ATP binding site. Mg(2+) contacts are provided by Asp-288, Glu-300, and Asn-302.

This sequence belongs to the D-alanine--D-alanine ligase family. Requires Mg(2+) as cofactor. It depends on Mn(2+) as a cofactor.

Its subcellular location is the cytoplasm. It carries out the reaction 2 D-alanine + ATP = D-alanyl-D-alanine + ADP + phosphate + H(+). It participates in cell wall biogenesis; peptidoglycan biosynthesis. Cell wall formation. The protein is D-alanine--D-alanine ligase of Helicobacter pylori (strain P12).